The chain runs to 201 residues: Large ribosomal subunit protein uL18 (201 aa).

The protein belongs to the universal ribosomal protein uL18 family. Part of the 50S ribosomal subunit. Contacts the 5S and 23S rRNAs.

Functionally, this is one of the proteins that bind and probably mediate the attachment of the 5S RNA into the large ribosomal subunit, where it forms part of the central protuberance. In Thermococcus kodakarensis (strain ATCC BAA-918 / JCM 12380 / KOD1) (Pyrococcus kodakaraensis (strain KOD1)), this protein is Large ribosomal subunit protein uL18.